A 550-amino-acid polypeptide reads, in one-letter code: Eukaryotic translation initiation factor 3 subunit L (550 aa).

Positions 1 to 20 are disordered; it reads MVRDSFDGGHTGDPERDLAY. A PCI domain is found at 309 to 503; sequence EATKIFVNCL…IDDSTTDLDF (195 aa).

The protein belongs to the eIF-3 subunit L family. In terms of assembly, component of the eukaryotic translation initiation factor 3 (eIF-3) complex.

It localises to the cytoplasm. Functionally, component of the eukaryotic translation initiation factor 3 (eIF-3) complex, which is involved in protein synthesis of a specialized repertoire of mRNAs and, together with other initiation factors, stimulates binding of mRNA and methionyl-tRNAi to the 40S ribosome. The eIF-3 complex specifically targets and initiates translation of a subset of mRNAs involved in cell proliferation. The protein is Eukaryotic translation initiation factor 3 subunit L of Brugia malayi (Filarial nematode worm).